The following is a 157-amino-acid chain: Transcriptional regulator MraZ (157 aa).

2 SpoVT-AbrB domains span residues 7 to 54 (TYEC…PMKE) and 83 to 126 (VRII…DKDL).

It belongs to the MraZ family. As to quaternary structure, forms oligomers.

It is found in the cytoplasm. Its subcellular location is the nucleoid. This is Transcriptional regulator MraZ from Flavobacterium psychrophilum (strain ATCC 49511 / DSM 21280 / CIP 103535 / JIP02/86).